A 397-amino-acid polypeptide reads, in one-letter code: Acylalkylpyrone synthase csyB (397 aa).

CoA is bound by residues Lys50 and 50-57 (KMLEINRK). The active-site Nucleophile is Cys155. Residue 214–215 (GD) participates in substrate binding. CoA contacts are provided by residues Ile267, Gly312, 312-315 (GGYA), Tyr314, and Ala315. His377 is an active-site residue.

This sequence belongs to the thiolase-like superfamily. Chalcone/stilbene synthases family. As to quaternary structure, homodimer.

Functionally, acylalkylpyrone synthase that catalyzes not only the polyketide chain elongation but also the one-pot condensation of two beta-ketoacyl units to produce the 3-acyl-4-hydroxy-6-alkyl-alpha-pyrone (AcAP) scaffold, a precursor of csypyrone B. The enzyme reaction is initiated by the loading of acetoacetyl-CoA onto Cys-155, and subsequent thioester bond cleavage by the nucleophilic water generates the beta-keto acid intermediate, which is placed within a pocket. The second beta-ketoacyl unit is then produced by polyketide chain elongation of fatty acyl-CoA with one molecule of malonyl-CoA, and the condensation with the beta-ketoacid generates the final products. Csypyrone B1 is the major product and contains a propanoic acid side-chain, whereas csypyrones B2 and B3 are minor compounds that contain butyric or pentanoic acid side-chains, respectively. The polypeptide is Acylalkylpyrone synthase csyB (Aspergillus oryzae (strain ATCC 42149 / RIB 40) (Yellow koji mold)).